The sequence spans 194 residues: Putative 3-methyladenine DNA glycosylase (194 aa).

This sequence belongs to the DNA glycosylase MPG family.

The sequence is that of Putative 3-methyladenine DNA glycosylase from Synechococcus elongatus (strain ATCC 33912 / PCC 7942 / FACHB-805) (Anacystis nidulans R2).